Here is a 326-residue protein sequence, read N- to C-terminus: tRNA uridine(34) hydroxylase (326 aa).

Residues 123–217 form the Rhodanese domain; the sequence is SDPEVLLIDT…YLEEVKPEES (95 aa). The active-site Cysteine persulfide intermediate is Cys-177. A disordered region spans residues 293-326; that stretch reads KSRGESHIGSDVKQVIEARRQDKVERKQRQHQEG.

Belongs to the TrhO family.

The enzyme catalyses uridine(34) in tRNA + AH2 + O2 = 5-hydroxyuridine(34) in tRNA + A + H2O. Functionally, catalyzes oxygen-dependent 5-hydroxyuridine (ho5U) modification at position 34 in tRNAs. This Shewanella loihica (strain ATCC BAA-1088 / PV-4) protein is tRNA uridine(34) hydroxylase.